The sequence spans 278 residues: MTFEPSATLRDPFVLYGESFGSRLLLGTARYPSPATLEAAVQASAPAMITVALRRQGAVGDGEGGQAFWQMLKALNVPVLPNTAGCFTAQEVITTAMMAREVFETPWIKLELIGDDYTLQPDTLNLPAVAETLLKEGFKVLPYCTEDLVLCRRLLDVGCQALMPWAAPIGTGRGAVNPHAMRVLRERLPDTPLIVDAGLGLPSHAAQVLEWGYDGVLLNTAVAQAAYPVDMARAFAQAVAAGRTAYLAGPMPEREVAQASTPVVGMPFWHADNTEQRA.

The Schiff-base intermediate with DXP role is filled by Lys-109. Residues Gly-170, 197-198 (AG), and 219-220 (NT) contribute to the 1-deoxy-D-xylulose 5-phosphate site.

This sequence belongs to the ThiG family. Homotetramer. Forms heterodimers with either ThiH or ThiS.

The protein localises to the cytoplasm. The catalysed reaction is [ThiS sulfur-carrier protein]-C-terminal-Gly-aminoethanethioate + 2-iminoacetate + 1-deoxy-D-xylulose 5-phosphate = [ThiS sulfur-carrier protein]-C-terminal Gly-Gly + 2-[(2R,5Z)-2-carboxy-4-methylthiazol-5(2H)-ylidene]ethyl phosphate + 2 H2O + H(+). The protein operates within cofactor biosynthesis; thiamine diphosphate biosynthesis. Catalyzes the rearrangement of 1-deoxy-D-xylulose 5-phosphate (DXP) to produce the thiazole phosphate moiety of thiamine. Sulfur is provided by the thiocarboxylate moiety of the carrier protein ThiS. In vitro, sulfur can be provided by H(2)S. The chain is Thiazole synthase from Cupriavidus taiwanensis (strain DSM 17343 / BCRC 17206 / CCUG 44338 / CIP 107171 / LMG 19424 / R1) (Ralstonia taiwanensis (strain LMG 19424)).